The sequence spans 85 residues: Translational regulator CsrA (85 aa).

Belongs to the CsrA/RsmA family. As to quaternary structure, homodimer; the beta-strands of each monomer intercalate to form a hydrophobic core, while the alpha-helices form wings that extend away from the core.

The protein localises to the cytoplasm. Functionally, a translational regulator that binds mRNA to regulate translation initiation and/or mRNA stability. Usually binds in the 5'-UTR at or near the Shine-Dalgarno sequence preventing ribosome-binding, thus repressing translation. Its main target seems to be the major flagellin gene, while its function is anatagonized by FliW. The polypeptide is Translational regulator CsrA (Leifsonia xyli subsp. xyli (strain CTCB07)).